Consider the following 499-residue polypeptide: Potassium voltage-gated channel subfamily A member 2 (499 aa).

Residues 1–26 form a disordered region; that stretch reads MTVATEDPADEAAALPGHPQDTYDPE. The tetramerization domain stretch occupies residues 1–125; it reads MTVATEDPAD…YELGEEAMEM (125 aa). The Cytoplasmic segment spans residues 1-160; sequence MTVATEDPAD…LLFEYPESSG (160 aa). A helical transmembrane segment spans residues 161–182; it reads PARIIAIVSVMVILISIVSFCL. Residues 183–221 lie on the Extracellular side of the membrane; that stretch reads ETLPIFRDENEDMHGSGMTFHTYSNSTAGYQQSTSFTDP. N-linked (GlcNAc...) asparagine glycosylation is present at N207. The chain crosses the membrane as a helical span at residues 222–243; sequence FFIVETLCIIWFSFEFLVRFFA. C244 is lipidated: S-palmitoyl cysteine. The Cytoplasmic segment spans residues 244–254; that stretch reads CPSKAGFFTNI. A helical transmembrane segment spans residues 255–275; sequence MNIIDIVAIIPYFITLGTELA. Topologically, residues 276-289 are extracellular; it reads EKPEDAQQGQQAMS. A helical; Voltage-sensor membrane pass occupies residues 290–310; sequence LAILRVIRLVRVFRIFKLSRH. Topologically, residues 311-325 are cytoplasmic; that stretch reads SKGLQILGQTLKASM. The S4-S5 linker stretch occupies residues 312–325; sequence KGLQILGQTLKASM. Residues 326 to 347 traverse the membrane as a helical segment; the sequence is RELGLLIFFLFIGVILFSSAVY. The Extracellular portion of the chain corresponds to 348-361; that stretch reads FAEADERDSQFPSI. The segment at residues 362–373 is an intramembrane region (helical); sequence PDAFWWAVVSMT. Positions 374–379 match the Selectivity filter motif; that stretch reads TVGYGD. Residues 374–381 lie within the membrane without spanning it; sequence TVGYGDMV. At 382–388 the chain is on the extracellular side; it reads PTTIGGK. Residues 389-417 form a helical membrane-spanning segment; that stretch reads IVGSLCAIAGVLTIALPVPVIVSNFNYFY. Residues 418–499 are Cytoplasmic-facing; the sequence is HRETEGEEQA…VNITKMLTDV (82 aa). Y429 carries the post-translational modification Phosphotyrosine. 4 positions are modified to phosphoserine: S434, S440, S441, and S449. The residue at position 458 (Y458) is a Phosphotyrosine. S468 is subject to Phosphoserine. The PDZ-binding motif lies at 497-499; the sequence is TDV.

The protein belongs to the potassium channel family. A (Shaker) (TC 1.A.1.2) subfamily. Kv1.2/KCNA2 sub-subfamily. As to quaternary structure, homotetramer and heterotetramer with other channel-forming alpha subunits, such as KCNA1, KCNA4, KCNA5, KCNA6 and KCNA7. Channel activity is regulated by interaction with the beta subunits, including KCNAB1 and KCNAB2. Identified in a complex with KCNA1 and KCNAB2. Identified in a complex with KCNA4 and FYN. Identified in a complex with KCNA5 and KCNAB1. Interacts with the beta subunit KCNAB1. Interacts with PTK2B. Interacts (via C-terminus) with CTTN. Interacts (via N-terminal cytoplasmic domain) with RHOA (GTP-bound form); this regulates channel activity by reducing location at the cell surface in response to CHRM1 activation. Interacts with DRD2. Interacts with SIGMAR1; cocaine consumption leads to increased interaction. Interacts with ADAM22. Interacts with CNTNAP2. Interacts (via C-terminus) with the PDZ domains of DLG1, DLG2 and DLG4. Interacts with ADAM11. Interacts with LYNX1. In terms of processing, phosphorylated on tyrosine residues; phosphorylation increases in response to ischemia. Phosphorylated on tyrosine residues by activated PTK2B/PYK2. Phosphorylation on tyrosine residues suppresses ion channel activity. Phosphorylated on tyrosine residues in response to CHRM1 activation; this abolishes interaction with CTTN. This is probably due to endocytosis of the phosphorylated channel subunits. Phosphorylated on serine residues in response to increased cAMP levels; phosphorylation is apparently not catalyzed by PKA. Post-translationally, N-glycosylated, with complex, sialylated N-glycans. Detected in portal vein myocytes (at protein level). Detected in portal vein. Brain, liver and kidney.

It localises to the cell membrane. Its subcellular location is the membrane. It is found in the cell projection. The protein localises to the axon. The protein resides in the synapse. It localises to the presynaptic cell membrane. Its subcellular location is the synaptosome. It is found in the endoplasmic reticulum membrane. The protein localises to the dendrite. The protein resides in the lamellipodium membrane. It localises to the cell junction. Its subcellular location is the paranodal septate junction. The catalysed reaction is K(+)(in) = K(+)(out). Its activity is regulated as follows. Inhibited by 4-aminopyridine (4-AP). Inhibited by dendrotoxin (DTX) and charybdotoxin (CTX), but not by tetraethylammonium (TEA). Inhibited by tityustoxin-K alpha (TsTX-Kalpha), a toxin that is highly specific for KCNA2. Inhibited by maurotoxin. Inhibited by kappaM conotoxins kappaM-RIIIJ and kappaM-RIIIK. Its function is as follows. Voltage-gated potassium channel that mediates transmembrane potassium transport in excitable membranes, primarily in the brain and the central nervous system, but also in the cardiovascular system. Prevents aberrant action potential firing and regulates neuronal output. Forms tetrameric potassium-selective channels through which potassium ions pass in accordance with their electrochemical gradient. The channel alternates between opened and closed conformations in response to the voltage difference across the membrane. Can form functional homotetrameric channels and heterotetrameric channels that contain variable proportions of KCNA1, KCNA2, KCNA4, KCNA5, KCNA6, KCNA7, and possibly other family members as well; channel properties depend on the type of alpha subunits that are part of the channel. Channel properties are modulated by cytoplasmic beta subunits that regulate the subcellular location of the alpha subunits and promote rapid inactivation of delayed rectifier potassium channels. In vivo, membranes probably contain a mixture of heteromeric potassium channel complexes, making it difficult to assign currents observed in intact tissues to any particular potassium channel family member. Homotetrameric KCNA2 forms a delayed-rectifier potassium channel that opens in response to membrane depolarization, followed by slow spontaneous channel closure. In contrast, a heteromultimer formed by KCNA2 and KCNA4 shows rapid inactivation. Regulates neuronal excitability and plays a role as pacemaker in the regulation of neuronal action potentials. KCNA2-containing channels play a presynaptic role and prevent hyperexcitability and aberrant action potential firing. Response to toxins that are selective for KCNA2-containing potassium channels suggests that in Purkinje cells, dendritic subthreshold KCNA2-containing potassium channels prevent random spontaneous calcium spikes, suppressing dendritic hyperexcitability without hindering the generation of somatic action potentials, and thereby play an important role in motor coordination. Plays a role in the induction of long-term potentiation of neuron excitability in the CA3 layer of the hippocampus. May function as down-stream effector for G protein-coupled receptors and inhibit GABAergic inputs to basolateral amygdala neurons. May contribute to the regulation of neurotransmitter release, such as gamma-aminobutyric acid (GABA). Contributes to the regulation of the axonal release of the neurotransmitter dopamine. Reduced KCNA2 expression plays a role in the perception of neuropathic pain after peripheral nerve injury, but not acute pain. Plays a role in the regulation of the time spent in non-rapid eye movement (NREM) sleep. The chain is Potassium voltage-gated channel subfamily A member 2 (KCNA2) from Oryctolagus cuniculus (Rabbit).